The chain runs to 361 residues: Chorismate synthase (361 aa).

Residues Arg48 and Arg54 each coordinate NADP(+). FMN is bound by residues 125-127, 240-241, Gly286, 301-305, and Arg327; these read RSS, NA, and KPTSS.

This sequence belongs to the chorismate synthase family. Homotetramer. Requires FMNH2 as cofactor.

The catalysed reaction is 5-O-(1-carboxyvinyl)-3-phosphoshikimate = chorismate + phosphate. It participates in metabolic intermediate biosynthesis; chorismate biosynthesis; chorismate from D-erythrose 4-phosphate and phosphoenolpyruvate: step 7/7. Its function is as follows. Catalyzes the anti-1,4-elimination of the C-3 phosphate and the C-6 proR hydrogen from 5-enolpyruvylshikimate-3-phosphate (EPSP) to yield chorismate, which is the branch point compound that serves as the starting substrate for the three terminal pathways of aromatic amino acid biosynthesis. This reaction introduces a second double bond into the aromatic ring system. This is Chorismate synthase from Magnetococcus marinus (strain ATCC BAA-1437 / JCM 17883 / MC-1).